The chain runs to 401 residues: Acetate kinase (401 aa).

Asn-10 provides a ligand contact to Mg(2+). Lys-17 contributes to the ATP binding site. Arg-91 is a binding site for substrate. The active-site Proton donor/acceptor is Asp-150. Residues 210-214 (HLGNG), 285-287 (DCR), and 333-337 (GIGEN) contribute to the ATP site. Glu-387 is a Mg(2+) binding site.

It belongs to the acetokinase family. As to quaternary structure, homodimer. Requires Mg(2+) as cofactor. Mn(2+) is required as a cofactor.

The protein localises to the cytoplasm. It carries out the reaction acetate + ATP = acetyl phosphate + ADP. It participates in metabolic intermediate biosynthesis; acetyl-CoA biosynthesis; acetyl-CoA from acetate: step 1/2. Catalyzes the formation of acetyl phosphate from acetate and ATP. Can also catalyze the reverse reaction. The sequence is that of Acetate kinase from Pasteurella multocida (strain Pm70).